Here is a 324-residue protein sequence, read N- to C-terminus: Porphobilinogen deaminase (324 aa).

An S-(dipyrrolylmethanemethyl)cysteine modification is found at cysteine 246. Positions 261–279 are insert; that stretch reads GQAPEEGGRAAASQAPAAL.

The protein belongs to the HMBS family. As to quaternary structure, monomer. Dipyrromethane is required as a cofactor.

The catalysed reaction is 4 porphobilinogen + H2O = hydroxymethylbilane + 4 NH4(+). Its pathway is porphyrin-containing compound metabolism; protoporphyrin-IX biosynthesis; coproporphyrinogen-III from 5-aminolevulinate: step 2/4. Functionally, tetrapolymerization of the monopyrrole PBG into the hydroxymethylbilane pre-uroporphyrinogen in several discrete steps. The polypeptide is Porphobilinogen deaminase (hemC) (Paenibacillus macerans (Bacillus macerans)).